Consider the following 247-residue polypeptide: Oocyte zinc finger protein XlCOF20 (247 aa).

C2H2-type zinc fingers lie at residues 6 to 28 (YDCRECGKRYTKRNNLYIHQRVH), 34 to 56 (FPCTECGKGFSHKSQLIIHQRVH), 62 to 84 (FICSECGKGFSKNYGLILHLRVH), 90 to 112 (FVCTECGQRFSKNNVLSMHQRVH), 118 to 140 (FTCTECGKRFSQKRQLNLHLRVH), 146 to 168 (FVCTECGKRFSKNDVLLIHLRVH), 174 to 196 (FMCADCGRCFSVSSSLKYHQRIC), and 225 to 247 (QSCAECGKCFSSNYNLSLHMRVH).

Belongs to the krueppel C2H2-type zinc-finger protein family.

The protein resides in the nucleus. In terms of biological role, may be involved in transcriptional regulation. This Xenopus laevis (African clawed frog) protein is Oocyte zinc finger protein XlCOF20.